We begin with the raw amino-acid sequence, 101 residues long: Urease subunit beta (101 aa).

The protein belongs to the urease beta subunit family. As to quaternary structure, heterotrimer of UreA (gamma), UreB (beta) and UreC (alpha) subunits. Three heterotrimers associate to form the active enzyme.

Its subcellular location is the cytoplasm. The catalysed reaction is urea + 2 H2O + H(+) = hydrogencarbonate + 2 NH4(+). Its pathway is nitrogen metabolism; urea degradation; CO(2) and NH(3) from urea (urease route): step 1/1. This is Urease subunit beta from Ralstonia pickettii (strain 12J).